Here is a 426-residue protein sequence, read N- to C-terminus: Glutamate-1-semialdehyde 2,1-aminomutase (426 aa).

Lys265 carries the N6-(pyridoxal phosphate)lysine modification.

This sequence belongs to the class-III pyridoxal-phosphate-dependent aminotransferase family. HemL subfamily. Homodimer. Pyridoxal 5'-phosphate serves as cofactor.

The protein localises to the cytoplasm. It catalyses the reaction (S)-4-amino-5-oxopentanoate = 5-aminolevulinate. It participates in porphyrin-containing compound metabolism; protoporphyrin-IX biosynthesis; 5-aminolevulinate from L-glutamyl-tRNA(Glu): step 2/2. This chain is Glutamate-1-semialdehyde 2,1-aminomutase, found in Salmonella enteritidis PT4 (strain P125109).